The primary structure comprises 123 residues: Guanine nucleotide exchange factor MSS4 (123 aa).

M1 carries the N-acetylmethionine modification. Positions 9–123 (ELVSAEGRNR…YVALERVSHE (115 aa)) constitute an MSS4 domain. Residues C23, C26, C94, and C97 each contribute to the Zn(2+) site.

This sequence belongs to the DSS4/MSS4 family. As to quaternary structure, interacts with RAB8A. In terms of tissue distribution, ubiquitous.

In terms of biological role, guanine-nucleotide-releasing protein that acts on members of the SEC4/YPT1/RAB subfamily. Stimulates GDP release from both YPT1, RAB3A and RAB10, but is less active on these proteins than on the SEC4 protein. Might play a general role in vesicular transport. The protein is Guanine nucleotide exchange factor MSS4 (RABIF) of Homo sapiens (Human).